We begin with the raw amino-acid sequence, 146 residues long: Large ribosomal subunit protein bL9 (146 aa).

Belongs to the bacterial ribosomal protein bL9 family.

Binds to the 23S rRNA. In Deinococcus geothermalis (strain DSM 11300 / CIP 105573 / AG-3a), this protein is Large ribosomal subunit protein bL9.